The chain runs to 712 residues: Ferric reductase transmembrane component 6 (712 aa).

A signal peptide spans 1–17 (MHRTLLFLTWLISLTKA). Over 18–167 (FNIKLPHTEK…HAHAYNLDIS (150 aa)) the chain is Vacuolar. N-linked (GlcNAc...) asparagine glycosylation is found at Asn89, Asn112, and Asn124. A helical transmembrane segment spans residues 168 to 188 (SVYGAYLTYYFVIVGIIAVFF). The Cytoplasmic portion of the chain corresponds to 189 to 244 (HMSHYNGLNRALFASRFVNYIRGHFVLPTFLVDKHANHFKFLNVEVFTGLMPNSLE). A helical transmembrane segment spans residues 245–265 (AWIIFGYTLANIIFLSISYII). The Vacuolar segment spans residues 266–287 (DPYNLIFNSHLSQFTRLLADRS). One can recognise a Ferric oxidoreductase domain in the interval 287–411 (SGILAFTQFP…YCCWQHVKIF (125 aa)). Residues 288-308 (GILAFTQFPLIIIFTARNSFL) form a helical membrane-spanning segment. At 309-328 (EFLTGVKFNSFISFHKWIGR) the chain is on the cytoplasmic side. 2 residues coordinate heme: His323 and His337. The helical transmembrane segment at 329 to 349 (IMVLNATIHSLSYSLFAIINH) threads the bilayer. The Vacuolar segment spans residues 350 to 360 (AFKISNKQLYW). A helical transmembrane segment spans residues 361–381 (KFGIASITVLCVLLVLSLGIV). Over 382–387 (RKRHYE) the chain is Cytoplasmic. Residues 388–408 (FFLYTHIILALLFFYCCWQHV) form a helical membrane-spanning segment. 2 residues coordinate heme: His393 and His407. Residues 409 to 416 (KIFNGWKE) lie on the Vacuolar side of the membrane. An FAD-binding FR-type domain is found at 412-546 (NGWKEWIVVS…EGPYGPSNLH (135 aa)). A helical transmembrane segment spans residues 417–437 (WIVVSLLIWGLEKLFRIWNIL). The Cytoplasmic portion of the chain corresponds to 438-712 (QFRFPKATLI…IEYFEEYQCW (275 aa)). 493-499 (HPFTIID) contacts FAD. Residues 538–541 (GPYG) and 678–679 (CG) each bind NADP(+).

This sequence belongs to the ferric reductase (FRE) family. It depends on FAD as a cofactor.

It is found in the vacuole membrane. The enzyme catalyses 2 a Fe(II)-siderophore + NADP(+) + H(+) = 2 a Fe(III)-siderophore + NADPH. In terms of biological role, metalloreductase responsible for reducing vacuolar iron and copper prior to transport into the cytosol. Catalyzes the reduction of Fe(3+) to Fe(2+) and Cu(2+) to Cu(+), respectively, which can then be transported by the respective vacuolar efflux systems to the cytosol. In Saccharomyces cerevisiae (strain ATCC 204508 / S288c) (Baker's yeast), this protein is Ferric reductase transmembrane component 6 (FRE6).